The primary structure comprises 500 residues: Transcription termination/antitermination protein NusA (500 aa).

Positions 135–205 (GEIVTGVVKK…RGAQLFVTRS (71 aa)) constitute an S1 motif domain. One can recognise a KH domain in the interval 307 to 373 (KHTMDIAVEA…FTKYLDIDEE (67 aa)). 2 repeat units span residues 369–419 (DIDE…KNAL) and 444–494 (GLDR…RNIC). Residues 369 to 494 (DIDEEFATVL…ELIMAARNIC (126 aa)) are 2 X 51 AA approximate repeats.

Belongs to the NusA family. As to quaternary structure, monomer. Binds directly to the core enzyme of the DNA-dependent RNA polymerase and to nascent RNA.

The protein resides in the cytoplasm. Its function is as follows. Participates in both transcription termination and antitermination. This Salmonella typhimurium (strain LT2 / SGSC1412 / ATCC 700720) protein is Transcription termination/antitermination protein NusA.